The primary structure comprises 911 residues: Eukaryotic translation initiation factor 3 subunit C (911 aa).

Disordered stretches follow at residues 1–38 (MSRF…DDEE) and 155–181 (SRFR…GEAA). Positions 11–20 (SESESSEEEV) are enriched in acidic residues. Residues 23–32 (PNFNKASAFQ) show a composition bias toward polar residues. A phosphoserine mark is found at S34, S165, S175, and S184. The segment covering 162 to 171 (DQESEAEDEE) has biased composition (acidic residues). Positions 196 to 208 (APKIAKSAPAKSV) are enriched in low complexity. The segment at 196–284 (APKIAKSAPA…KRAEDDEDGE (89 aa)) is disordered. Residues 210–236 (ADDEDSDDSIDWDSDSESETESSEDEN) are compositionally biased toward acidic residues. Residues 241–271 (MRERFLKRSTEKGEDKGDDDKRKDKRKEQKL) are compositionally biased toward basic and acidic residues. The 177-residue stretch at 642-818 (FHMHINLELL…ETVVMHRSEP (177 aa)) folds into the PCI domain. The disordered stretch occupies residues 851-911 (FQRGNMGNRG…QQQVQTIDEE (61 aa)). The span at 885–896 (QRNRNQRGHHKN) shows a compositional bias: basic residues. Residues 897 to 911 (QQQQQQQQVQTIDEE) show a composition bias toward low complexity.

This sequence belongs to the eIF-3 subunit C family. As to quaternary structure, component of the eukaryotic translation initiation factor 3 (eIF-3) complex. The eIF-3 complex interacts with pix.

The protein resides in the cytoplasm. Its function is as follows. Component of the eukaryotic translation initiation factor 3 (eIF-3) complex, which is involved in protein synthesis of a specialized repertoire of mRNAs and, together with other initiation factors, stimulates binding of mRNA and methionyl-tRNAi to the 40S ribosome. The eIF-3 complex specifically targets and initiates translation of a subset of mRNAs involved in cell proliferation. The polypeptide is Eukaryotic translation initiation factor 3 subunit C (Drosophila pseudoobscura pseudoobscura (Fruit fly)).